The primary structure comprises 489 residues: 5'-AMP-activated protein kinase subunit gamma-3 (489 aa).

A disordered region spans residues 1–95; sequence MEPELEHTLP…TRQEATFPKA (95 aa). Over residues 32-47 the composition is skewed to polar residues; it reads GENSWPSPAVATSSER. CBS domains lie at 197 to 258, 280 to 340, and 355 to 415; these read MATS…RSPL, CFKP…LLPR, and TFRD…HLDM. Residues Arg225, 240-245, Val285, 306-307, and Lys325 contribute to the ADP site; these read MLTITD and HR. Residues Arg225, 240–245, Val285, His306, 306–307, Lys325, Thr355, Ala360, 381–382, 397–400, Arg424, Leu432, His453, 453–454, and 469–472 contribute to the AMP site; these read MLTITD, HR, SA, SRFD, and SLSD. Residues Arg225, 240-245, Val285, 306-307, Arg307, and Lys325 contribute to the ATP site; these read MLTITD and HR. An AMPK pseudosubstrate motif is present at residues 293 to 314; the sequence is LFEAVYALIKNRIHRLPVLDPV. Residues 397–400, Arg424, Leu432, and 453–454 contribute to the ADP site; these read SRFD and HR. Residues 397–400, Arg424, Leu432, and 453–454 each bind ATP; these read SRFD and HR. The CBS 4 domain maps to 427–486; that stretch reads CLEGVLSCQPHESLGEVIDRIAREQVHRLVLVDETQHLLGVVSLSDILQALVLSPAGIDA.

It belongs to the 5'-AMP-activated protein kinase gamma subunit family. In terms of assembly, AMPK is a heterotrimer of an alpha catalytic subunit (PRKAA1 or PRKAA2), a beta (PRKAB1 or PRKAB2) and a gamma non-catalytic subunits (PRKAG1, PRKAG2 or PRKAG3). Interacts with FNIP1 and FNIP2. Post-translationally, phosphorylated by ULK1; leading to negatively regulate AMPK activity and suggesting the existence of a regulatory feedback loop between ULK1 and AMPK. In terms of processing, glycosylated; O-GlcNAcylated by OGT, promoting the AMP-activated protein kinase (AMPK) activity.

Its function is as follows. AMP/ATP-binding subunit of AMP-activated protein kinase (AMPK), an energy sensor protein kinase that plays a key role in regulating cellular energy metabolism. In response to reduction of intracellular ATP levels, AMPK activates energy-producing pathways and inhibits energy-consuming processes: inhibits protein, carbohydrate and lipid biosynthesis, as well as cell growth and proliferation. AMPK acts via direct phosphorylation of metabolic enzymes, and by longer-term effects via phosphorylation of transcription regulators. AMPK also acts as a regulator of cellular polarity by remodeling the actin cytoskeleton; probably by indirectly activating myosin. The AMPK gamma3 subunit is a non-catalytic subunit with a regulatory role in muscle energy metabolism. It mediates binding to AMP, ADP and ATP, leading to AMPK activation or inhibition: AMP-binding results in allosteric activation of alpha catalytic subunit (PRKAA1 or PRKAA2) both by inducing phosphorylation and preventing dephosphorylation of catalytic subunits. ADP also stimulates phosphorylation, without stimulating already phosphorylated catalytic subunit. ATP promotes dephosphorylation of catalytic subunit, rendering the AMPK enzyme inactive. The sequence is that of 5'-AMP-activated protein kinase subunit gamma-3 (Prkag3) from Mus musculus (Mouse).